Reading from the N-terminus, the 263-residue chain is Thiamine thiazole synthase (263 aa).

NAD(+) is bound by residues serine 43, 62–63 (ER), glycine 70, valine 134, and 160–162 (HID). Aspartate 162 and histidine 177 together coordinate Fe cation. Serine 180 and methionine 227 together coordinate NAD(+). Position 237 (arginine 237) interacts with glycine.

It belongs to the THI4 family. As to quaternary structure, homooctamer; tetramer of dimers. The cofactor is Fe(2+).

It catalyses the reaction hydrogen sulfide + glycine + NAD(+) = ADP-5-ethyl-4-methylthiazole-2-carboxylate + nicotinamide + 3 H2O + H(+). Its pathway is cofactor biosynthesis; thiamine diphosphate biosynthesis. Functionally, involved in the biosynthesis of the thiazole moiety of thiamine. Catalyzes the conversion of NAD and glycine to adenosine diphosphate 5-(2-hydroxyethyl)-4-methylthiazole-2-carboxylate (ADT), an adenylated thiazole intermediate, using free sulfide as a source of sulfur. This is Thiamine thiazole synthase from Methanococcus aeolicus (strain ATCC BAA-1280 / DSM 17508 / OCM 812 / Nankai-3).